The primary structure comprises 156 residues: 6,7-dimethyl-8-ribityllumazine synthase (156 aa).

5-amino-6-(D-ribitylamino)uracil contacts are provided by residues phenylalanine 22, 57–59, and 81–83; these read AYE and TVI. A (2S)-2-hydroxy-3-oxobutyl phosphate-binding site is contributed by 86 to 87; that stretch reads GT. Histidine 89 serves as the catalytic Proton donor. Phenylalanine 114 lines the 5-amino-6-(D-ribitylamino)uracil pocket. Arginine 128 is a (2S)-2-hydroxy-3-oxobutyl phosphate binding site.

It belongs to the DMRL synthase family. Forms an icosahedral capsid composed of 60 subunits, arranged as a dodecamer of pentamers.

It carries out the reaction (2S)-2-hydroxy-3-oxobutyl phosphate + 5-amino-6-(D-ribitylamino)uracil = 6,7-dimethyl-8-(1-D-ribityl)lumazine + phosphate + 2 H2O + H(+). The protein operates within cofactor biosynthesis; riboflavin biosynthesis; riboflavin from 2-hydroxy-3-oxobutyl phosphate and 5-amino-6-(D-ribitylamino)uracil: step 1/2. Functionally, catalyzes the formation of 6,7-dimethyl-8-ribityllumazine by condensation of 5-amino-6-(D-ribitylamino)uracil with 3,4-dihydroxy-2-butanone 4-phosphate. This is the penultimate step in the biosynthesis of riboflavin. In Serratia proteamaculans (strain 568), this protein is 6,7-dimethyl-8-ribityllumazine synthase.